A 141-amino-acid polypeptide reads, in one-letter code: Small ribosomal subunit protein bS6 (141 aa).

Residues 97–141 (TGQSEMLKAEENRSERRERRDRPEHSDSADGDDGDNSDVSDNADE) form a disordered region. Positions 103-124 (LKAEENRSERRERRDRPEHSDS) are enriched in basic and acidic residues. Residues 125–141 (ADGDDGDNSDVSDNADE) show a composition bias toward acidic residues.

Belongs to the bacterial ribosomal protein bS6 family.

In terms of biological role, binds together with bS18 to 16S ribosomal RNA. This Pseudomonas syringae pv. syringae (strain B728a) protein is Small ribosomal subunit protein bS6.